Reading from the N-terminus, the 291-residue chain is Lipoyl synthase (291 aa).

[4Fe-4S] cluster is bound by residues C35, C40, C46, C61, C65, C68, and S273. The Radical SAM core domain occupies 47 to 262 (FGKRQATFLI…KERALTMGFE (216 aa)).

The protein belongs to the radical SAM superfamily. Lipoyl synthase family. Requires [4Fe-4S] cluster as cofactor.

The protein resides in the cytoplasm. It catalyses the reaction [[Fe-S] cluster scaffold protein carrying a second [4Fe-4S](2+) cluster] + N(6)-octanoyl-L-lysyl-[protein] + 2 oxidized [2Fe-2S]-[ferredoxin] + 2 S-adenosyl-L-methionine + 4 H(+) = [[Fe-S] cluster scaffold protein] + N(6)-[(R)-dihydrolipoyl]-L-lysyl-[protein] + 4 Fe(3+) + 2 hydrogen sulfide + 2 5'-deoxyadenosine + 2 L-methionine + 2 reduced [2Fe-2S]-[ferredoxin]. It functions in the pathway protein modification; protein lipoylation via endogenous pathway; protein N(6)-(lipoyl)lysine from octanoyl-[acyl-carrier-protein]: step 2/2. Catalyzes the radical-mediated insertion of two sulfur atoms into the C-6 and C-8 positions of the octanoyl moiety bound to the lipoyl domains of lipoate-dependent enzymes, thereby converting the octanoylated domains into lipoylated derivatives. The chain is Lipoyl synthase from Citrifermentans bemidjiense (strain ATCC BAA-1014 / DSM 16622 / JCM 12645 / Bem) (Geobacter bemidjiensis).